A 533-amino-acid polypeptide reads, in one-letter code: Chromosomal replication initiator protein DnaA (533 aa).

The segment at 1–72 (MNDFWQHCSA…DLARDFWNAP (72 aa)) is domain I, interacts with DnaA modulators. The domain II stretch occupies residues 72–196 (PIEVQFVLDP…EAADSMYERS (125 aa)). Residues 83 to 110 (AGQRSPAGATPLAPRAPLPSANPAPVGP) form a disordered region. Residues 96–110 (PRAPLPSANPAPVGP) are compositionally biased toward pro residues. The segment at 197-413 (KLNPVLTFDN…GALRKILAYS (217 aa)) is domain III, AAA+ region. ATP contacts are provided by G241, G243, K244, and T245. Residues 414 to 533 (KFHGREITIE…LHVLEQTLKG (120 aa)) are domain IV, binds dsDNA.

Belongs to the DnaA family. As to quaternary structure, oligomerizes as a right-handed, spiral filament on DNA at oriC.

It is found in the cytoplasm. Functionally, plays an essential role in the initiation and regulation of chromosomal replication. ATP-DnaA binds to the origin of replication (oriC) to initiate formation of the DNA replication initiation complex once per cell cycle. Binds the DnaA box (a 9 base pair repeat at the origin) and separates the double-stranded (ds)DNA. Forms a right-handed helical filament on oriC DNA; dsDNA binds to the exterior of the filament while single-stranded (ss)DNA is stabiized in the filament's interior. The ATP-DnaA-oriC complex binds and stabilizes one strand of the AT-rich DNA unwinding element (DUE), permitting loading of DNA polymerase. After initiation quickly degrades to an ADP-DnaA complex that is not apt for DNA replication. Binds acidic phospholipids. This Burkholderia mallei (strain NCTC 10247) protein is Chromosomal replication initiator protein DnaA.